The following is a 399-amino-acid chain: Elongation factor Tu 1 (399 aa).

One can recognise a tr-type G domain in the interval 17 to 208; that stretch reads KPHVNVGTIG…LDDYVEVPPR (192 aa). The segment at 26 to 33 is G1; that stretch reads GHVDHGKT. Residue 26 to 33 participates in GTP binding; it reads GHVDHGKT. T33 lines the Mg(2+) pocket. A G2 region spans residues 62-66; it reads GITIA. The tract at residues 83–86 is G3; the sequence is DCPG. GTP contacts are provided by residues 83-87 and 138-141; these read DCPGH and NKAD. The interval 138–141 is G4; it reads NKAD. Residues 175–177 form a G5 region; that stretch reads SAL.

Belongs to the TRAFAC class translation factor GTPase superfamily. Classic translation factor GTPase family. EF-Tu/EF-1A subfamily. As to quaternary structure, monomer.

It is found in the cytoplasm. The catalysed reaction is GTP + H2O = GDP + phosphate + H(+). In terms of biological role, GTP hydrolase that promotes the GTP-dependent binding of aminoacyl-tRNA to the A-site of ribosomes during protein biosynthesis. The sequence is that of Elongation factor Tu 1 from Wolbachia sp. subsp. Brugia malayi (strain TRS).